The sequence spans 250 residues: 5'-nucleotidase SurE (250 aa).

Positions 8, 9, 39, and 95 each coordinate a divalent metal cation.

The protein belongs to the SurE nucleotidase family. The cofactor is a divalent metal cation.

The protein resides in the cytoplasm. It carries out the reaction a ribonucleoside 5'-phosphate + H2O = a ribonucleoside + phosphate. Its function is as follows. Nucleotidase that shows phosphatase activity on nucleoside 5'-monophosphates. This chain is 5'-nucleotidase SurE, found in Cupriavidus taiwanensis (strain DSM 17343 / BCRC 17206 / CCUG 44338 / CIP 107171 / LMG 19424 / R1) (Ralstonia taiwanensis (strain LMG 19424)).